Consider the following 331-residue polypeptide: tRNA U34 carboxymethyltransferase (331 aa).

Carboxy-S-adenosyl-L-methionine is bound by residues Lys-91, Trp-105, Lys-110, Gly-130, 152–154, 181–182, Met-196, Tyr-200, and Arg-315; these read DPS and IE.

This sequence belongs to the class I-like SAM-binding methyltransferase superfamily. CmoB family. As to quaternary structure, homotetramer.

The enzyme catalyses carboxy-S-adenosyl-L-methionine + 5-hydroxyuridine(34) in tRNA = 5-carboxymethoxyuridine(34) in tRNA + S-adenosyl-L-homocysteine + H(+). Catalyzes carboxymethyl transfer from carboxy-S-adenosyl-L-methionine (Cx-SAM) to 5-hydroxyuridine (ho5U) to form 5-carboxymethoxyuridine (cmo5U) at position 34 in tRNAs. This is tRNA U34 carboxymethyltransferase from Shewanella baltica (strain OS185).